The following is a 415-amino-acid chain: Maintenance of mitochondrial morphology protein 1 (415 aa).

The Lumenal portion of the chain corresponds to 1 to 18 (MADICPSRSEPTLSFTQG). The helical transmembrane segment at 19 to 39 (LILGQLSVVLLLAAFIKFFIF) threads the bilayer. Residues 40–415 (GDPPSPEVVA…MPGSMPGSMP (376 aa)) lie on the Cytoplasmic side of the membrane. The SMP-LTD domain maps to 114–330 (QPESLDWFNV…EPRFQEIALP (217 aa)). The segment covering 373–389 (IEAEAHGGADRVPDSLR) has biased composition (basic and acidic residues). Positions 373-415 (IEAEAHGGADRVPDSLRYRHRPRADEEFPGAGSMPGSMPGSMP) are disordered. The span at 404–415 (GSMPGSMPGSMP) shows a compositional bias: low complexity.

It belongs to the MMM1 family. Homodimer. Component of the ER-mitochondria encounter structure (ERMES) or MDM complex, composed of mmm-1, mdm10, mdm12 and mdm34. A mmm-1 homodimer associates with one molecule of mdm12 on each side in a pairwise head-to-tail manner, and the SMP-LTD domains of mmm-1 and mdm12 generate a continuous hydrophobic tunnel for phospholipid trafficking.

It localises to the endoplasmic reticulum membrane. In terms of biological role, component of the ERMES/MDM complex, which serves as a molecular tether to connect the endoplasmic reticulum (ER) and mitochondria. Components of this complex are involved in the control of mitochondrial shape and protein biogenesis, and function in nonvesicular lipid trafficking between the ER and mitochondria. The mdm12-mmm-1 subcomplex functions in the major beta-barrel assembly pathway that is responsible for biogenesis of all outer membrane beta-barrel proteins, and acts in a late step after the SAM complex. The mdm10-mdm12-mmm-1 subcomplex further acts in the TOM40-specific pathway after the action of the mdm12-mmm-1 complex. Essential for establishing and maintaining the structure of mitochondria and maintenance of mtDNA nucleoids. The protein is Maintenance of mitochondrial morphology protein 1 (mmm-1) of Neurospora crassa (strain ATCC 24698 / 74-OR23-1A / CBS 708.71 / DSM 1257 / FGSC 987).